Reading from the N-terminus, the 574-residue chain is Putative thiamine pyrophosphate-containing protein YdaP (574 aa).

Positions 28-55 (DSINEFIEELRHERNQLKFIQTRHEEVA) form a coiled coil. A thiamine diphosphate-binding site is contributed by Glu-52. FAD contacts are provided by residues 256 to 277 (IGTK…LGTS) and 294 to 313 (DSDP…LVCD). Positions 384–464 (TVTVWMARHF…ITVVILNNEN (81 aa)) are thiamine pyrophosphate binding. The Mg(2+) site is built by Asp-435 and Asn-462.

It belongs to the TPP enzyme family. Mg(2+) is required as a cofactor. The cofactor is thiamine diphosphate.

In Bacillus subtilis (strain 168), this protein is Putative thiamine pyrophosphate-containing protein YdaP (ydaP).